A 94-amino-acid polypeptide reads, in one-letter code: Small ribosomal subunit protein uS19c (94 aa).

The protein belongs to the universal ribosomal protein uS19 family.

The protein resides in the plastid. The protein localises to the chloroplast. Functionally, protein S19 forms a complex with S13 that binds strongly to the 16S ribosomal RNA. This is Small ribosomal subunit protein uS19c from Cyanidioschyzon merolae (strain NIES-3377 / 10D) (Unicellular red alga).